The primary structure comprises 367 residues: 2-aminoethylphosphonate--pyruvate transaminase (367 aa).

Position 194 is an N6-(pyridoxal phosphate)lysine (Lys-194).

It belongs to the class-V pyridoxal-phosphate-dependent aminotransferase family. PhnW subfamily. Homodimer. It depends on pyridoxal 5'-phosphate as a cofactor.

The enzyme catalyses (2-aminoethyl)phosphonate + pyruvate = phosphonoacetaldehyde + L-alanine. In terms of biological role, involved in phosphonate degradation. The polypeptide is 2-aminoethylphosphonate--pyruvate transaminase (Salmonella dublin (strain CT_02021853)).